Consider the following 342-residue polypeptide: Nuclear hormone receptor family member nhr-150 (342 aa).

Residues methionine 1–serine 71 constitute a DNA-binding region (nuclear receptor). An NR C4-type zinc finger spans residues cysteine 2 to cysteine 22. An NR C4-type; degenerate zinc finger spans residues cysteine 39–cysteine 54. The 248-residue stretch at serine 94–lysine 341 folds into the NR LBD domain.

This sequence belongs to the nuclear hormone receptor family.

The protein localises to the nucleus. Functionally, orphan nuclear receptor. This is Nuclear hormone receptor family member nhr-150 (nhr-150) from Caenorhabditis elegans.